Consider the following 36-residue polypeptide: Pancreatic polypeptide (36 aa).

Y36 carries the post-translational modification Tyrosine amide.

It belongs to the NPY family.

It localises to the secreted. In terms of biological role, hormone secreted by pancreatic cells that acts as a regulator of pancreatic and gastrointestinal functions probably by signaling through the G protein-coupled receptor NPY4R2. This chain is Pancreatic polypeptide (PPY), found in Tapirus pinchaque (Mountain tapir).